The primary structure comprises 338 residues: Lipoate-protein ligase A (338 aa).

The BPL/LPL catalytic domain maps to 29–216 (SPNQRVLFLW…AFFAYYDEQV (188 aa)). Residues Arg-71, 76–79 (GAVF), and Lys-134 each bind ATP. (R)-lipoate is bound at residue Lys-134.

The protein belongs to the LplA family. Monomer.

Its subcellular location is the cytoplasm. It catalyses the reaction L-lysyl-[lipoyl-carrier protein] + (R)-lipoate + ATP = N(6)-[(R)-lipoyl]-L-lysyl-[lipoyl-carrier protein] + AMP + diphosphate + H(+). Its pathway is protein modification; protein lipoylation via exogenous pathway; protein N(6)-(lipoyl)lysine from lipoate: step 1/2. It functions in the pathway protein modification; protein lipoylation via exogenous pathway; protein N(6)-(lipoyl)lysine from lipoate: step 2/2. Functionally, catalyzes both the ATP-dependent activation of exogenously supplied lipoate to lipoyl-AMP and the transfer of the activated lipoyl onto the lipoyl domains of lipoate-dependent enzymes. The polypeptide is Lipoate-protein ligase A (Yersinia pseudotuberculosis serotype O:1b (strain IP 31758)).